The sequence spans 392 residues: Enoyl-[acyl-carrier-protein] reductase [NADH] (392 aa).

Residues Gly46 to Tyr51, Leu72 to Glu73, Asp108 to Ala109, and Val136 to Ala137 contribute to the NAD(+) site. Tyr225 contacts substrate. Residue Tyr235 is the Proton donor of the active site. Residues Lys244 and Leu273–Thr275 contribute to the NAD(+) site.

It belongs to the TER reductase family. Monomer.

The catalysed reaction is a 2,3-saturated acyl-[ACP] + NAD(+) = a (2E)-enoyl-[ACP] + NADH + H(+). It functions in the pathway lipid metabolism; fatty acid biosynthesis. Its function is as follows. Involved in the final reduction of the elongation cycle of fatty acid synthesis (FAS II). Catalyzes the reduction of a carbon-carbon double bond in an enoyl moiety that is covalently linked to an acyl carrier protein (ACP). This is Enoyl-[acyl-carrier-protein] reductase [NADH] from Streptomyces avermitilis (strain ATCC 31267 / DSM 46492 / JCM 5070 / NBRC 14893 / NCIMB 12804 / NRRL 8165 / MA-4680).